A 453-amino-acid polypeptide reads, in one-letter code: Ethanolamine ammonia-lyase large subunit (453 aa).

Residues 160-162 (RLQ) and Asn-193 contribute to the substrate site. Adenosylcob(III)alamin is bound by residues Pro-194 and Gln-246. Residue Glu-287 participates in substrate binding. Residue Ser-295 participates in adenosylcob(III)alamin binding. Residue Asp-362 coordinates substrate. Met-401 contributes to the adenosylcob(III)alamin binding site.

Belongs to the EutB family. In terms of assembly, the basic unit is a heterodimer which dimerizes to form tetramers. The heterotetramers trimerize; 6 large subunits form a core ring with 6 small subunits projecting outwards. The cofactor is adenosylcob(III)alamin.

It localises to the bacterial microcompartment. It carries out the reaction ethanolamine = acetaldehyde + NH4(+). The protein operates within amine and polyamine degradation; ethanolamine degradation. Its function is as follows. Catalyzes the deamination of various vicinal amino-alcohols to oxo compounds. Allows this organism to utilize ethanolamine as the sole source of nitrogen and carbon in the presence of vitamin B12. This chain is Ethanolamine ammonia-lyase large subunit, found in Escherichia coli O157:H7.